The chain runs to 130 residues: Small ribosomal subunit protein uS9 (130 aa).

This sequence belongs to the universal ribosomal protein uS9 family.

This is Small ribosomal subunit protein uS9 from Anaeromyxobacter dehalogenans (strain 2CP-1 / ATCC BAA-258).